Consider the following 214-residue polypeptide: MQKLRAAWHAHLPYDASIPLNQRRWITGEGSLTARLMSASAAFRVRRLAQAPQLPLADEWRALGLIRPLPAITREVLLICDETPAVFAHTIVDPRYARRDWPFLRGLGNRPLGGALFVDPRVRRDPFQFARLTPCHPLRQALQRVLPALSSEPMLPARRSVFRRGGGAMLVTEVFLPDLLTRAAPENTGAGGTRLPRRIDTHHTPSKQEERPES.

Positions 74, 112, and 173 each coordinate substrate. The segment at 183–214 is disordered; the sequence is AAPENTGAGGTRLPRRIDTHHTPSKQEERPES. The segment covering 197–214 has biased composition (basic and acidic residues); the sequence is RRIDTHHTPSKQEERPES.

The protein belongs to the UbiC family.

The protein resides in the cytoplasm. It carries out the reaction chorismate = 4-hydroxybenzoate + pyruvate. Its pathway is cofactor biosynthesis; ubiquinone biosynthesis. Its function is as follows. Removes the pyruvyl group from chorismate, with concomitant aromatization of the ring, to provide 4-hydroxybenzoate (4HB) for the ubiquinone pathway. This is Probable chorismate pyruvate-lyase from Cupriavidus metallidurans (strain ATCC 43123 / DSM 2839 / NBRC 102507 / CH34) (Ralstonia metallidurans).